Consider the following 440-residue polypeptide: Serine hydroxymethyltransferase (440 aa).

123–125 is a (6S)-5,6,7,8-tetrahydrofolate binding site; the sequence is GHI. Lysine 238 carries the N6-(pyridoxal phosphate)lysine modification.

It belongs to the SHMT family. In terms of assembly, homodimer. The cofactor is pyridoxal 5'-phosphate.

The protein localises to the cytoplasm. It participates in amino-acid biosynthesis; glycine biosynthesis; glycine from L-serine: step 1/1. In terms of biological role, catalyzes the reversible interconversion of serine and glycine with a modified folate serving as the one-carbon carrier. Also exhibits a pteridine-independent aldolase activity toward beta-hydroxyamino acids, producing glycine and aldehydes, via a retro-aldol mechanism. This Nitrosopumilus maritimus (strain SCM1) protein is Serine hydroxymethyltransferase.